Reading from the N-terminus, the 96-residue chain is Large ribosomal subunit protein eL21 (96 aa).

Belongs to the eukaryotic ribosomal protein eL21 family.

The polypeptide is Large ribosomal subunit protein eL21 (Methanosphaerula palustris (strain ATCC BAA-1556 / DSM 19958 / E1-9c)).